Reading from the N-terminus, the 341-residue chain is Phosphoribosylformylglycinamidine cyclo-ligase (341 aa).

Belongs to the AIR synthase family.

Its subcellular location is the cytoplasm. It catalyses the reaction 2-formamido-N(1)-(5-O-phospho-beta-D-ribosyl)acetamidine + ATP = 5-amino-1-(5-phospho-beta-D-ribosyl)imidazole + ADP + phosphate + H(+). It participates in purine metabolism; IMP biosynthesis via de novo pathway; 5-amino-1-(5-phospho-D-ribosyl)imidazole from N(2)-formyl-N(1)-(5-phospho-D-ribosyl)glycinamide: step 2/2. This Finegoldia magna (strain ATCC 29328 / DSM 20472 / WAL 2508) (Peptostreptococcus magnus) protein is Phosphoribosylformylglycinamidine cyclo-ligase.